Here is a 37-residue protein sequence, read N- to C-terminus: Cytochrome bd-I ubiquinol oxidase subunit X (37 aa).

Residues 4–24 (FAWILGTLLACSFGVITALAL) traverse the membrane as a helical segment.

Belongs to the cytochrome ubiquinol oxidase subunit X family. As to quaternary structure, may be a subunit of cytochrome bd-I ubiquinol oxidase. Probably interacts with CydA and CydB.

It is found in the cell inner membrane. The catalysed reaction is 2 a ubiquinol + O2(in) + 4 H(+)(in) = 2 a ubiquinone + 2 H2O(in) + 4 H(+)(out). It functions in the pathway energy metabolism; oxidative phosphorylation. Functionally, required for correct functioning of cytochrome bd-I oxidase. This protein and AppX may have some functional overlap. In Escherichia coli (strain K12), this protein is Cytochrome bd-I ubiquinol oxidase subunit X (cydX).